The following is a 279-amino-acid chain: Reaction center protein L chain (279 aa).

3 helical membrane-spanning segments follow: residues 33-56 (GFFG…GASQ), 85-113 (GLWQ…RKLG), and 116-141 (YHVP…ILMG). Residues His-154 and His-174 each contribute to the (7R,8Z)-bacteriochlorophyll b site. The helical transmembrane segment at 171–200 (NPAHMLAITFFFTTTLAMSMHGGLILSAAN) threads the bilayer. His-191 serves as a coordination point for Fe cation. Phe-217 is a binding site for a ubiquinone. A helical membrane pass occupies residues 226–252 (GSLGIHRLGLFLALSAAFWSAVCIVIS). Position 231 (His-231) interacts with Fe cation.

Belongs to the reaction center PufL/M/PsbA/D family. As to quaternary structure, reaction center is composed of four bacteriochlorophylls, two bacteriopheophytins, two ubiquinones, one iron, and three highly hydrophobic polypeptide chains (designated L, M, and H).

Its subcellular location is the cell inner membrane. In terms of biological role, the reaction center is a membrane-bound complex that mediates the initial photochemical event in the electron transfer process of photosynthesis. The sequence is that of Reaction center protein L chain (pufL) from Rubrivivax gelatinosus (Rhodocyclus gelatinosus).